The chain runs to 1010 residues: Outer kinetochore KNL1 complex subunit knl-1 (1010 aa).

9 repeat units span residues 85 to 88, 109 to 112, 228 to 231, 255 to 258, 278 to 281, 323 to 326, 346 to 349, 402 to 405, and 428 to 431. A 9 X 4 AA repeats of M-[D/E]-[I/L/M]-[S/T] region spans residues 85–431; it reads MDISESPACT…LQKEDLMDIS (347 aa). Coiled coils occupy residues 820–915 and 956–988; these read RIVE…GLDK and KALR…KFAQ.

As to quaternary structure, component of the KNL1 complex composed of knl-1 and kbp-5. Part of the ten-subunit outer kinetochore KMN network that includes the KNL1, MIS12 and NDC80 complexes. Interacts with the protein phosphatase 1 (PP1) catalytic subunit gsp-1; the interaction is direct. Interacts with the protein phosphatase 1 (PP1) catalytic subunit gsp-2; the interaction is direct. Interacts with the MIS12 complex subunits kbp-1, kbp-2 and mis-12. Interacts with the NDC80 complex components ndc-80 and him-10. Interacts with knl-3. Interacts with kbp-3. Interacts with kbp-4. Interacts with kbp-5.

Its subcellular location is the cytoplasm. The protein localises to the cell cortex. It localises to the chromosome. The protein resides in the centromere. It is found in the kinetochore. In terms of biological role, acts as a component of the outer kinetochore KNL1 complex that serves as a docking point for spindle assembly checkpoint components and mediates microtubule-kinetochore interactions. Kinetochores, consisting of a centromere-associated inner segment and a microtubule-contacting outer segment, play a crucial role in chromosome segregation by mediating the physical connection between centromeric DNA and spindle microtubules. The outer kinetochore is made up of the ten-subunit KMN network, comprising the MIS12, NDC80 and KNL1 complexes, and auxiliary microtubule-associated components; together they connect the outer kinetochore with the inner kinetochore, bind microtubules, and mediate interactions with mitotic checkpoint proteins that delay anaphase until chromosomes are bioriented on the spindle. Binds the protein phosphatase 1 catalytic subunits gsp-1 and gsp-2, which has a role in delaying formation of load-bearing kinetochore-microtubule attachments. Required for the recruitment of spindle-assembly checkpoint components bub-1 and mdf-1/2 to unattached kinetochores. Binds microtubules which plays a role in silencing of the spindle assembly checkpoint, but not the formation of load-bearing microtubule-kinetochore attachments. Has a role in the correct localization of the spindly-like protein spdl-1 and the RZZ complex that is composed of rod-1, czw-1 and zwl-1 to kinetochores. This Caenorhabditis elegans protein is Outer kinetochore KNL1 complex subunit knl-1 (knl-1).